A 370-amino-acid chain; its full sequence is Glutamine synthetase (370 aa).

The GS beta-grasp domain occupies 23–102; the sequence is VLAEYVWIDA…VLTECWNNDG (80 aa). The segment at 40 to 69 is disordered; the sequence is CKTLDKKPSSVEDLPEWNFDGSSTGQAPGH. Residues 109 to 370 enclose the GS catalytic domain; that stretch reads HRHESAKLMK…FKEYARESSD (262 aa).

It belongs to the glutamine synthetase family. As to quaternary structure, homooctamer.

The protein localises to the cytoplasm. It catalyses the reaction L-glutamate + NH4(+) + ATP = L-glutamine + ADP + phosphate + H(+). In Debaryomyces hansenii (strain ATCC 36239 / CBS 767 / BCRC 21394 / JCM 1990 / NBRC 0083 / IGC 2968) (Yeast), this protein is Glutamine synthetase (GLN1).